The chain runs to 645 residues: MFSIFIKIILILPSIATKTNNIDIKSWRSAQTFDGFGAVSGGGATSKLLFTYFSEKSDRKQVLESLFNKDNGLQLLKVEMGGDDQSTEGTESSHESEKGKISKNNYEFQLISEVREINPTIPICVLPWAFPGWIGNTPYDNVTETAEYVVNWLKIGRDTWNFDTFCVGVWNERNFSESYVKELRKILNLNGFNETLIVAGEGFRMDDSYSRLLDKRFINEYDIIGVHYPGGRIPENVQKSGKVIWASEDYSTDNRDTGEGCMARTMNWNFINGNITGMISWHLMSAFYPQLPWYRCGLARIDENKFQTEKAFHVLKYITSHVKRGWKILRESSGRFDGGGTYVTYTNGKDSTIFVETMSYKKSLCEYSSPRPYHVKPSQLIRFKFSEIPSFQGLNMSLNFGPSKFFSKSVNSTITILLPVNSFGILTTLPVSTPKRVTIKTPLVPLNYHDDFENYEFDEEPKFWMPQKGSWVVRNGRAVQKVTRPSISWCTSHIRTPYAVMAYRKKNSILNAEVNIPKHSTAKSIILGIRSNCSGCDIEVINCRGIFVEIEFSNKKVTIFSDFVDRSIIAEFKARRKVEFGKFYKFSIHLLDSHLFIKFGNHHVMTSVEIPEEQLNKTNNDTLFVIGTGNFGISEWDNISTDYFH.

Positions 1–16 (MFSIFIKIILILPSIA) are cleaved as a signal peptide. Residues threonine 87 and tryptophan 128 each coordinate substrate. Asparagine 141 is a glycosylation site (N-linked (GlcNAc...) asparagine). Asparagine 171 serves as a coordination point for substrate. Glutamate 172 acts as the Proton donor/acceptor in catalysis. N-linked (GlcNAc...) asparagine glycans are attached at residues asparagine 174 and asparagine 193. Residue glutamate 248 is the Nucleophile of the active site. A disulfide bond links cysteine 261 and cysteine 365. Asparagine 274, asparagine 395, asparagine 411, asparagine 532, asparagine 616, asparagine 620, and asparagine 638 each carry an N-linked (GlcNAc...) asparagine glycan.

Belongs to the glycosyl hydrolase 59 family.

It carries out the reaction a beta-D-Gal-(1&lt;-&gt;1')-ceramide + H2O = an N-acyl-sphingoid base + D-galactose. It catalyses the reaction a beta-D-galactosyl-(1&lt;-&gt;1')-N-acylsphing-4-enine + H2O = an N-acylsphing-4-enine + D-galactose. In terms of biological role, hydrolyzes the galactose ester bonds of galactosylceramide, galactosylsphingoid base, lactosylceramide, and monogalactosyldiglyceride. C.elegans contain specific sphingoid bases, which are unique or different in structure compared to the sphingoid bases found in other animals. Two examples of these distinctive compounds are: 15-methylhexadecasphinganine and 15-methylhexadecasphing-4-enine. This is Putative galactocerebrosidase from Caenorhabditis elegans.